The primary structure comprises 407 residues: Endo-1,4-beta-xylanase (407 aa).

An N-terminal signal peptide occupies residues Met1–Ala28. Residues Ala42–His406 form the GH10 domain. Glu187 functions as the Proton donor in the catalytic mechanism. Glu293 (nucleophile) is an active-site residue.

The protein belongs to the glycosyl hydrolase 10 (cellulase F) family.

It is found in the secreted. The catalysed reaction is Endohydrolysis of (1-&gt;4)-beta-D-xylosidic linkages in xylans.. It participates in glycan degradation; xylan degradation. The sequence is that of Endo-1,4-beta-xylanase from Geobacillus stearothermophilus (Bacillus stearothermophilus).